A 30-amino-acid chain; its full sequence is Conopeptide Vi002 (30 aa).

Expressed by the venom gland.

Its subcellular location is the secreted. The chain is Conopeptide Vi002 from Conus virgo (Virgin cone).